We begin with the raw amino-acid sequence, 514 residues long: Putative selenium-binding protein (514 aa).

This sequence belongs to the selenium-binding protein family.

This is Putative selenium-binding protein from Caenorhabditis briggsae.